A 248-amino-acid polypeptide reads, in one-letter code: Triosephosphate isomerase A (248 aa).

Asparagine 11 and lysine 13 together coordinate substrate. Residue histidine 95 is the Electrophile of the active site. Glutamate 165 (proton acceptor) is an active-site residue.

The protein belongs to the triosephosphate isomerase family. As to quaternary structure, homodimer.

Its subcellular location is the cytoplasm. It catalyses the reaction dihydroxyacetone phosphate = methylglyoxal + phosphate. The enzyme catalyses D-glyceraldehyde 3-phosphate = dihydroxyacetone phosphate. Its pathway is carbohydrate degradation; glycolysis; D-glyceraldehyde 3-phosphate from glycerone phosphate: step 1/1. The protein operates within carbohydrate biosynthesis; gluconeogenesis. Its function is as follows. Triosephosphate isomerase is an extremely efficient metabolic enzyme that catalyzes the interconversion between dihydroxyacetone phosphate (DHAP) and D-glyceraldehyde-3-phosphate (G3P) in glycolysis and gluconeogenesis. Functionally, it is also responsible for the non-negligible production of methylglyoxal a reactive cytotoxic side-product that modifies and can alter proteins, DNA and lipids. In Danio rerio (Zebrafish), this protein is Triosephosphate isomerase A (tpi1a).